A 414-amino-acid chain; its full sequence is Tyrosine--tRNA ligase (414 aa).

Tyrosine 35 serves as a coordination point for L-tyrosine. Residues 40–49 carry the 'HIGH' region motif; that stretch reads PTADSLHVGH. Positions 164 and 168 each coordinate L-tyrosine. Positions 226 to 230 match the 'KMSKS' region motif; sequence KFGKT. Lysine 229 contributes to the ATP binding site. An S4 RNA-binding domain is found at 347-414; it reads TKVIDALIEV…KKKYFVILIK (68 aa).

Belongs to the class-I aminoacyl-tRNA synthetase family. TyrS type 1 subfamily. As to quaternary structure, homodimer.

It localises to the cytoplasm. The enzyme catalyses tRNA(Tyr) + L-tyrosine + ATP = L-tyrosyl-tRNA(Tyr) + AMP + diphosphate + H(+). In terms of biological role, catalyzes the attachment of tyrosine to tRNA(Tyr) in a two-step reaction: tyrosine is first activated by ATP to form Tyr-AMP and then transferred to the acceptor end of tRNA(Tyr). This is Tyrosine--tRNA ligase from Mycoplasma mycoides subsp. mycoides SC (strain CCUG 32753 / NCTC 10114 / PG1).